A 381-amino-acid polypeptide reads, in one-letter code: Arf-GAP with dual PH domain-containing protein 2 (381 aa).

The Arf-GAP domain occupies 9–132; sequence KRLLELLQAA…TAIDKAVSHP (124 aa). The segment at 25-48 adopts a C4-type zinc-finger fold; that stretch reads CADCGAADPDWASYKLGIFICLHC. PH domains follow at residues 132–233 and 255–361; these read PGNR…AARL and NYLK…GVLS.

The protein localises to the cytoplasm. It is found in the cell membrane. Its function is as follows. GTPase-activating protein for the ADP ribosylation factor family (Potential). Binds phosphatidylinositol 3,4,5-trisphosphate (PtdInsP3) and inositol 1,3,4,5-tetrakisphosphate (InsP4). Possesses a stoichiometry of two binding sites for InsP4 with identical affinity. The protein is Arf-GAP with dual PH domain-containing protein 2 (Adap2) of Mus musculus (Mouse).